The primary structure comprises 194 residues: MAPAASRLRVESELRSLPKRALAQYLLFLKFYPVVTKAVSSGILSALGNLLAQMIEKKQKKDSRSLEVSGLLRYLVYGLFVTGPLSHYLYLFMEYWVPPEVPWARVKRLLLDRLFFAPTFLLLFFFVMNLLEGKNISVFVAKMRSGFWPALQMNWRMWTPLQFININYVPLQFRVLFANMAALFWYAYLASLGK.

At 2-30 (APAASRLRVESELRSLPKRALAQYLLFLK) the chain is on the cytoplasmic side. The helical transmembrane segment at 31–51 (FYPVVTKAVSSGILSALGNLL) threads the bilayer. The Peroxisomal segment spans residues 52–74 (AQMIEKKQKKDSRSLEVSGLLRY). Residues 75 to 95 (LVYGLFVTGPLSHYLYLFMEY) traverse the membrane as a helical segment. The Cytoplasmic segment spans residues 96 to 113 (WVPPEVPWARVKRLLLDR). The helical transmembrane segment at 114–134 (LFFAPTFLLLFFFVMNLLEGK) threads the bilayer. The Peroxisomal portion of the chain corresponds to 135 to 172 (NISVFVAKMRSGFWPALQMNWRMWTPLQFININYVPLQ). A helical transmembrane segment spans residues 173–193 (FRVLFANMAALFWYAYLASLG).

This sequence belongs to the peroxisomal membrane protein PXMP2/4 family. Interacts with PEX19 and SIVA1.

The protein resides in the peroxisome membrane. Functionally, seems to be involved in pore-forming activity and may contribute to the unspecific permeability of the peroxisomal membrane. This Rattus norvegicus (Rat) protein is Peroxisomal membrane protein 2 (Pxmp2).